The following is an 88-amino-acid chain: Protein Aeq5-like1 (88 aa).

Residues 1–20 (MKSVIAVLVLSLVLVNFTQA) form the signal peptide. Cystine bridges form between cysteine 29/cysteine 68, cysteine 33/cysteine 64, cysteine 40/cysteine 56, and cysteine 47/cysteine 53.

As to expression, is expressed in the ectodermal cells of gastrulae and planulae. Is also noticeable in the endoderm in late planulae. In the primary polyps, is expressed in both ectoderm (sensory neurons) and endoderm (ganglions). Is not expressed in nematocytes.

In terms of biological role, probable neuropeptide. The protein is Protein Aeq5-like1 of Nematostella vectensis (Starlet sea anemone).